Reading from the N-terminus, the 593-residue chain is Elongation factor 4 (593 aa).

The region spanning 2–181 is the tr-type G domain; the sequence is DKIRNFCIIA…AVIERIPHPQ (180 aa). GTP contacts are provided by residues 14 to 19 and 128 to 131; these read DHGKST and NKCD.

It belongs to the TRAFAC class translation factor GTPase superfamily. Classic translation factor GTPase family. LepA subfamily.

Its subcellular location is the cell inner membrane. It catalyses the reaction GTP + H2O = GDP + phosphate + H(+). In terms of biological role, required for accurate and efficient protein synthesis under certain stress conditions. May act as a fidelity factor of the translation reaction, by catalyzing a one-codon backward translocation of tRNAs on improperly translocated ribosomes. Back-translocation proceeds from a post-translocation (POST) complex to a pre-translocation (PRE) complex, thus giving elongation factor G a second chance to translocate the tRNAs correctly. Binds to ribosomes in a GTP-dependent manner. The sequence is that of Elongation factor 4 from Bacteroides fragilis (strain ATCC 25285 / DSM 2151 / CCUG 4856 / JCM 11019 / LMG 10263 / NCTC 9343 / Onslow / VPI 2553 / EN-2).